Reading from the N-terminus, the 671-residue chain is tRNA 5-methylaminomethyl-2-thiouridine biosynthesis bifunctional protein MnmC (671 aa).

The tRNA (mnm(5)s(2)U34)-methyltransferase stretch occupies residues 1–245 (MVNVMNTLSF…KREMLWGEKP (245 aa)). Positions 272 to 671 (VGGGVASLFV…RKLLKGSKVE (400 aa)) are FAD-dependent cmnm(5)s(2)U34 oxidoreductase.

In the N-terminal section; belongs to the methyltransferase superfamily. tRNA (mnm(5)s(2)U34)-methyltransferase family. It in the C-terminal section; belongs to the DAO family. FAD serves as cofactor.

It is found in the cytoplasm. It carries out the reaction 5-aminomethyl-2-thiouridine(34) in tRNA + S-adenosyl-L-methionine = 5-methylaminomethyl-2-thiouridine(34) in tRNA + S-adenosyl-L-homocysteine + H(+). Catalyzes the last two steps in the biosynthesis of 5-methylaminomethyl-2-thiouridine (mnm(5)s(2)U) at the wobble position (U34) in tRNA. Catalyzes the FAD-dependent demodification of cmnm(5)s(2)U34 to nm(5)s(2)U34, followed by the transfer of a methyl group from S-adenosyl-L-methionine to nm(5)s(2)U34, to form mnm(5)s(2)U34. This Actinobacillus pleuropneumoniae serotype 3 (strain JL03) protein is tRNA 5-methylaminomethyl-2-thiouridine biosynthesis bifunctional protein MnmC.